We begin with the raw amino-acid sequence, 352 residues long: N-acetyl-gamma-glutamyl-phosphate reductase 1 (352 aa).

This sequence belongs to the NAGSA dehydrogenase family. Type 1 subfamily.

The protein resides in the cytoplasm. It carries out the reaction N-acetyl-L-glutamate 5-semialdehyde + phosphate + NADP(+) = N-acetyl-L-glutamyl 5-phosphate + NADPH + H(+). It functions in the pathway amino-acid biosynthesis; L-arginine biosynthesis; N(2)-acetyl-L-ornithine from L-glutamate: step 3/4. Catalyzes the NADPH-dependent reduction of N-acetyl-5-glutamyl phosphate to yield N-acetyl-L-glutamate 5-semialdehyde. This is N-acetyl-gamma-glutamyl-phosphate reductase 1 from Nostoc sp. (strain PCC 7120 / SAG 25.82 / UTEX 2576).